The sequence spans 85 residues: Large ribosomal subunit protein bL27 (85 aa).

It belongs to the bacterial ribosomal protein bL27 family.

In Xylella fastidiosa (strain 9a5c), this protein is Large ribosomal subunit protein bL27.